The following is an 84-amino-acid chain: Putative membrane protein insertion efficiency factor (84 aa).

It belongs to the UPF0161 family.

It localises to the cell inner membrane. In terms of biological role, could be involved in insertion of integral membrane proteins into the membrane. The chain is Putative membrane protein insertion efficiency factor from Nostoc sp. (strain PCC 7120 / SAG 25.82 / UTEX 2576).